The following is a 430-amino-acid chain: Cytochrome c biogenesis protein CcsB (430 aa).

A run of 3 helical transmembrane segments spans residues 14 to 34 (LRLA…GTIL), 72 to 92 (SVWF…CSWR), and 162 to 182 (VGPL…AWGA).

The protein belongs to the Ccs1/CcsB family. As to quaternary structure, may interact with CcsA.

It localises to the cellular thylakoid membrane. In terms of biological role, required during biogenesis of c-type cytochromes (cytochrome c6 and cytochrome f) at the step of heme attachment. The sequence is that of Cytochrome c biogenesis protein CcsB from Synechococcus sp. (strain WH7803).